A 602-amino-acid polypeptide reads, in one-letter code: MAETPRPAEHTSSLKIYFRLLSYVKPYVGIFLLSIVGFVIFASTQPMLAGILKYFVDGLSNPEAVLFPNVPYLRDLQLLQAVPLLIILIAAWQGLGSFLGNYFLAKVSLSLVHDLRVALFNKLLVLPNRYFDNHNSGHLISRITFNVTMVTGAATDAIKVVIREGLTVVFLFAYLLWMNWHLTLVMVAILPVIAVMVSIASKKFRKQSKKIQVAMGDVTHVASETIQGYRVVRSFGGEAYEQQRFGQASQSNTDKQLRMTKTGSLYTPMLQLVIYSAMAALMFLVLFLRGDSTAGDLVAYITAAGLLPKPIRQLSEVSSTIQKGLAGAESIFEQLDEAPEVDTGTVEKERVEGRLEVRNLSFTYPGTEREVLSDISFVAEPGQMIALVGRSGSGKSTLAALIPRFYHHDKGQILLDGVEIEHYRLRNLRRHVSQVTQHVTLFNDTVANNIAYGDLAGAPRADIEAAAADAYAKEFVDRLPKGFDTEVGENGVLLSGGQRQRLAIARALLKNAPLLILDEATSALDTESERHIQAALDHVMQGRTTLVIAHRLSTIEKADQILVMDQGRLVERGTHTELLAANGHYARLHAMGLDEPAKADIT.

5 helical membrane passes run Val-28–Leu-48, Leu-84–Leu-104, Ile-158–Met-178, Trp-180–Ala-200, and Pro-268–Leu-288. The region spanning Leu-32 to Lys-323 is the ABC transmembrane type-1 domain. The 237-residue stretch at Leu-355 to Met-591 folds into the ABC transporter domain. Gly-389 to Ser-396 contacts ATP.

The protein belongs to the ABC transporter superfamily. Lipid exporter (TC 3.A.1.106) family. In terms of assembly, homodimer.

It is found in the cell inner membrane. The catalysed reaction is ATP + H2O + lipid A-core oligosaccharideSide 1 = ADP + phosphate + lipid A-core oligosaccharideSide 2.. Its function is as follows. Involved in lipopolysaccharide (LPS) biosynthesis. Translocates lipid A-core from the inner to the outer leaflet of the inner membrane. Transmembrane domains (TMD) form a pore in the inner membrane and the ATP-binding domain (NBD) is responsible for energy generation. The polypeptide is ATP-dependent lipid A-core flippase (Pseudomonas putida (strain ATCC 47054 / DSM 6125 / CFBP 8728 / NCIMB 11950 / KT2440)).